The following is a 208-amino-acid chain: Uracil phosphoribosyltransferase (208 aa).

Residues R78, R103, and 130-138 (DPMLATGVS) contribute to the 5-phospho-alpha-D-ribose 1-diphosphate site. Uracil contacts are provided by residues I193 and 198–200 (GDA). D199 is a 5-phospho-alpha-D-ribose 1-diphosphate binding site.

Belongs to the UPRTase family. Mg(2+) serves as cofactor.

It carries out the reaction UMP + diphosphate = 5-phospho-alpha-D-ribose 1-diphosphate + uracil. The protein operates within pyrimidine metabolism; UMP biosynthesis via salvage pathway; UMP from uracil: step 1/1. With respect to regulation, allosterically activated by GTP. Catalyzes the conversion of uracil and 5-phospho-alpha-D-ribose 1-diphosphate (PRPP) to UMP and diphosphate. The protein is Uracil phosphoribosyltransferase of Thermosipho melanesiensis (strain DSM 12029 / CIP 104789 / BI429).